The following is a 351-amino-acid chain: dTDP-glucose 4,6-dehydratase (351 aa).

Residues 12-13 (FI), 32-35 (DALT), 58-59 (DI), 80-84 (FAAES), and Thr-99 each bind NAD(+). Residue Ser-84 coordinates substrate. Residue Thr-133 coordinates substrate. Asp-134 (proton donor) is an active-site residue. Active-site proton acceptor residues include Glu-135 and Tyr-158. 158-162 (YSASK) lines the NAD(+) pocket. Asn-187 is a substrate binding site. Asn-188 is an NAD(+) binding site. Substrate-binding positions include 197-198 (KL), 213-215 (PVY), Arg-222, Asn-257, and 289-293 (DRPGH).

This sequence belongs to the NAD(P)-dependent epimerase/dehydratase family. dTDP-glucose dehydratase subfamily. In terms of assembly, homodimer. NAD(+) serves as cofactor.

The catalysed reaction is dTDP-alpha-D-glucose = dTDP-4-dehydro-6-deoxy-alpha-D-glucose + H2O. It participates in carbohydrate biosynthesis; dTDP-L-rhamnose biosynthesis. Its pathway is bacterial outer membrane biogenesis; LPS O-antigen biosynthesis. Its function is as follows. Catalyzes the dehydration of dTDP-D-glucose to form dTDP-6-deoxy-D-xylo-4-hexulose via a three-step process involving oxidation, dehydration and reduction. This chain is dTDP-glucose 4,6-dehydratase (rfbB), found in Xanthomonas campestris pv. campestris (strain B100).